The sequence spans 446 residues: Exopolygalacturonase (446 aa).

The signal sequence occupies residues 1–17 (MRVTDIISCALLQASIA). 4 N-linked (GlcNAc...) asparagine glycosylation sites follow: asparagine 53, asparagine 118, asparagine 134, and asparagine 204. One copy of the PbH1 1 repeat lies at 236–257 (SDNIIIQNSNINNGDDCVSFKP). The Proton donor role is filled by aspartate 250. The cysteines at positions 252 and 269 are disulfide-linked. Residues asparagine 258 and asparagine 270 are each glycosylated (N-linked (GlcNAc...) asparagine). 3 PbH1 repeats span residues 259–279 (STNILVQNLVCNGSHGISVGS), 290–311 (VENILVRNISMSNASDGARIKV), and 332–353 (VRNVTYDGMIVKNVDYAIEITQ). Histidine 273 is an active-site residue. Residues asparagine 297, asparagine 302, asparagine 334, asparagine 359, and asparagine 369 are each glycosylated (N-linked (GlcNAc...) asparagine). 2 PbH1 repeats span residues 367 to 398 (PSNLTISDITIKNFKGTTSKKYDPRVGYVVCS) and 403 to 434 (CSDISIENIDVKSPSGTNLFTCANAEGIQSQV). Disulfide bonds link cysteine 397-cysteine 403 and cysteine 424-cysteine 436. N-linked (GlcNAc...) asparagine glycosylation occurs at asparagine 435.

The protein belongs to the glycosyl hydrolase 28 family.

The protein resides in the secreted. The catalysed reaction is [(1-&gt;4)-alpha-D-galacturonosyl](n) + H2O = alpha-D-galacturonate + [(1-&gt;4)-alpha-D-galacturonosyl](n-1). In terms of biological role, hydrolysis of 1,4-alpha-D-galactosiduronic linkages in pectate and other galacturonans. The polypeptide is Exopolygalacturonase (PGX1) (Cochliobolus carbonum (Maize leaf spot fungus)).